Here is a 559-residue protein sequence, read N- to C-terminus: Probable 2-ketoarginine decarboxylase AruI (559 aa).

Glu-76 provides a ligand contact to thiamine diphosphate.

This sequence belongs to the TPP enzyme family. It depends on thiamine diphosphate as a cofactor.

The catalysed reaction is 5-guanidino-2-oxopentanoate + H(+) = 4-guanidinobutanal + CO2. It functions in the pathway amino-acid degradation; L-arginine degradation. In terms of biological role, catalyzes the decarboxylation of 2-ketoarginine, leading to the formation of 4-guanidinobutyraldehyde. The chain is Probable 2-ketoarginine decarboxylase AruI (aruI) from Pseudomonas aeruginosa (strain ATCC 15692 / DSM 22644 / CIP 104116 / JCM 14847 / LMG 12228 / 1C / PRS 101 / PAO1).